Consider the following 272-residue polypeptide: Phosphate import ATP-binding protein PstB 1 (272 aa).

The region spanning 26–267 is the ABC transporter domain; the sequence is LEIRNLDLRY…PKKRKTEDYI (242 aa). 58-65 is an ATP binding site; it reads GPSGCGKS.

This sequence belongs to the ABC transporter superfamily. Phosphate importer (TC 3.A.1.7) family. As to quaternary structure, the complex is composed of two ATP-binding proteins (PstB), two transmembrane proteins (PstC and PstA) and a solute-binding protein (PstS).

Its subcellular location is the cell inner membrane. It carries out the reaction phosphate(out) + ATP + H2O = ADP + 2 phosphate(in) + H(+). Its function is as follows. Part of the ABC transporter complex PstSACB involved in phosphate import. Responsible for energy coupling to the transport system. The polypeptide is Phosphate import ATP-binding protein PstB 1 (Shewanella oneidensis (strain ATCC 700550 / JCM 31522 / CIP 106686 / LMG 19005 / NCIMB 14063 / MR-1)).